The chain runs to 142 residues: Hemoglobin subunit alpha-A (142 aa).

The Globin domain maps to 2-142 (VLSAADKTNV…VATVLTAKYR (141 aa)). H59 contributes to the O2 binding site. H88 lines the heme b pocket.

It belongs to the globin family. Heterotetramer of two alpha chains and two beta chains. As to expression, red blood cells.

Involved in oxygen transport from the lung to the various peripheral tissues. The protein is Hemoglobin subunit alpha-A (HBAA) of Apus apus (Common swift).